Consider the following 868-residue polypeptide: Leucine--tRNA ligase (868 aa).

Residues 42–52 carry the 'HIGH' region motif; the sequence is PYPSGKLHMGH. The 'KMSKS' region motif lies at 627-631; that stretch reads KMSKS. Lys630 contacts ATP.

This sequence belongs to the class-I aminoacyl-tRNA synthetase family.

The protein localises to the cytoplasm. The enzyme catalyses tRNA(Leu) + L-leucine + ATP = L-leucyl-tRNA(Leu) + AMP + diphosphate. This is Leucine--tRNA ligase from Pseudomonas putida (strain W619).